The primary structure comprises 732 residues: Elongation factor 2 (732 aa).

Residues 19–230 (ERIRNMGIAA…VSFKDIIDLT (212 aa)) enclose the tr-type G domain. GTP-binding positions include 28–35 (AHIDHGKT), 94–98 (DTPGH), and 148–151 (NKVD). His597 bears the Diphthamide mark.

The protein belongs to the TRAFAC class translation factor GTPase superfamily. Classic translation factor GTPase family. EF-G/EF-2 subfamily.

It localises to the cytoplasm. Its function is as follows. Catalyzes the GTP-dependent ribosomal translocation step during translation elongation. During this step, the ribosome changes from the pre-translocational (PRE) to the post-translocational (POST) state as the newly formed A-site-bound peptidyl-tRNA and P-site-bound deacylated tRNA move to the P and E sites, respectively. Catalyzes the coordinated movement of the two tRNA molecules, the mRNA and conformational changes in the ribosome. The protein is Elongation factor 2 of Thermococcus sibiricus (strain DSM 12597 / MM 739).